We begin with the raw amino-acid sequence, 345 residues long: Probable aldo-keto reductase 4 (345 aa).

Residue Y63 is the Proton donor of the active site. Substrate is bound at residue H130. 209–219 is a binding site for NADP(+); it reads SPLGRGFFASG.

Belongs to the aldo/keto reductase family.

The chain is Probable aldo-keto reductase 4 from Arabidopsis thaliana (Mouse-ear cress).